The following is a 2188-amino-acid chain: Glutamate synthase 2 [NADH], chloroplastic (2188 aa).

Residues 1–30 (MSAAQGLALKLRAAPAAGGVRGEKRRRAAS) constitute a chloroplast transit peptide. Disordered regions lie at residues 14 to 40 (APAA…ARPR) and 61 to 94 (VAPR…PESS). Over residues 65-80 (ASASRQAEAGAGAGAA) the composition is skewed to low complexity. The active-site Nucleophile is C107. In terms of domain architecture, Glutamine amidotransferase type-2 spans 107 to 511 (CGVGFIAELS…PGMMLLVDFE (405 aa)). 1198-1255 (LAETHQTLVANGLRGRAVLQTDGQMKTGRDVAVACLLGAEEFGFSTAPLITLGCIMMR) is a binding site for FMN. C1251, C1257, and C1262 together coordinate [3Fe-4S] cluster. Residue 1974 to 1988 (GGGDTGTDCIGTSIR) coordinates NAD(+).

Belongs to the glutamate synthase family. As to quaternary structure, monomer. Requires [3Fe-4S] cluster as cofactor. The cofactor is FAD. It depends on FMN as a cofactor. As to expression, expressed in leaf blades and sheaths.

It localises to the plastid. It is found in the chloroplast. The catalysed reaction is 2 L-glutamate + NAD(+) = L-glutamine + 2-oxoglutarate + NADH + H(+). It participates in amino-acid biosynthesis; L-glutamate biosynthesis via GLT pathway; L-glutamate from 2-oxoglutarate and L-glutamine (NAD(+) route): step 1/1. It functions in the pathway energy metabolism; nitrogen metabolism. In terms of biological role, involved in glutamate biosynthesis. This is Glutamate synthase 2 [NADH], chloroplastic from Oryza sativa subsp. japonica (Rice).